Here is a 368-residue protein sequence, read N- to C-terminus: DNA replication and repair protein RecF (368 aa).

30–37 is an ATP binding site; that stretch reads GDNGAGKT.

It belongs to the RecF family.

The protein localises to the cytoplasm. In terms of biological role, the RecF protein is involved in DNA metabolism; it is required for DNA replication and normal SOS inducibility. RecF binds preferentially to single-stranded, linear DNA. It also seems to bind ATP. In Xanthomonas euvesicatoria pv. vesicatoria (strain 85-10) (Xanthomonas campestris pv. vesicatoria), this protein is DNA replication and repair protein RecF.